The chain runs to 20 residues: Unknown protein NF042 from 2D-PAGE (20 aa).

The sequence is that of Unknown protein NF042 from 2D-PAGE from Naegleria fowleri (Brain eating amoeba).